Reading from the N-terminus, the 290-residue chain is UPF0507 protein YML003W (290 aa).

Belongs to the UPF0507 family.

The protein is UPF0507 protein YML003W of Saccharomyces cerevisiae (strain ATCC 204508 / S288c) (Baker's yeast).